A 287-amino-acid polypeptide reads, in one-letter code: S-methyl-5'-thioadenosine phosphorylase (287 aa).

Residues threonine 13 and 55-56 contribute to the phosphate site; that span reads RH. Methionine 186 serves as a coordination point for substrate. Residue threonine 187 coordinates phosphate. 210-212 provides a ligand contact to substrate; sequence DYD.

This sequence belongs to the PNP/MTAP phosphorylase family. MTAP subfamily. As to quaternary structure, homohexamer. Dimer of a homotrimer.

The enzyme catalyses S-methyl-5'-thioadenosine + phosphate = 5-(methylsulfanyl)-alpha-D-ribose 1-phosphate + adenine. It participates in amino-acid biosynthesis; L-methionine biosynthesis via salvage pathway; S-methyl-5-thio-alpha-D-ribose 1-phosphate from S-methyl-5'-thioadenosine (phosphorylase route): step 1/1. Functionally, catalyzes the reversible phosphorylation of S-methyl-5'-thioadenosine (MTA) to adenine and 5-methylthioribose-1-phosphate. Involved in the breakdown of MTA, a major by-product of polyamine biosynthesis. Responsible for the first step in the methionine salvage pathway after MTA has been generated from S-adenosylmethionine. Has broad substrate specificity with 6-aminopurine nucleosides as preferred substrates. The polypeptide is S-methyl-5'-thioadenosine phosphorylase (Leptospira interrogans serogroup Icterohaemorrhagiae serovar Lai (strain 56601)).